A 329-amino-acid chain; its full sequence is Ketol-acid reductoisomerase (NADP(+)) (329 aa).

The KARI N-terminal Rossmann domain maps to 2–182; that stretch reads VEIYYDDDAS…GGTRAGALRT (181 aa). Residues 25–28, S51, and S53 contribute to the NADP(+) site; that span reads YGSQ. The active site involves H108. G134 contacts NADP(+). Residues 183–328 enclose the KARI C-terminal knotted domain; the sequence is TFTEETETDL…AKLRPMMSWI (146 aa). 4 residues coordinate Mg(2+): D191, E195, E227, and E231. Residue S252 participates in substrate binding.

It belongs to the ketol-acid reductoisomerase family. The cofactor is Mg(2+).

The catalysed reaction is (2R)-2,3-dihydroxy-3-methylbutanoate + NADP(+) = (2S)-2-acetolactate + NADPH + H(+). The enzyme catalyses (2R,3R)-2,3-dihydroxy-3-methylpentanoate + NADP(+) = (S)-2-ethyl-2-hydroxy-3-oxobutanoate + NADPH + H(+). Its pathway is amino-acid biosynthesis; L-isoleucine biosynthesis; L-isoleucine from 2-oxobutanoate: step 2/4. It participates in amino-acid biosynthesis; L-valine biosynthesis; L-valine from pyruvate: step 2/4. Its function is as follows. Involved in the biosynthesis of branched-chain amino acids (BCAA). Catalyzes an alkyl-migration followed by a ketol-acid reduction of (S)-2-acetolactate (S2AL) to yield (R)-2,3-dihydroxy-isovalerate. In the isomerase reaction, S2AL is rearranged via a Mg-dependent methyl migration to produce 3-hydroxy-3-methyl-2-ketobutyrate (HMKB). In the reductase reaction, this 2-ketoacid undergoes a metal-dependent reduction by NADPH to yield (R)-2,3-dihydroxy-isovalerate. This Frankia casuarinae (strain DSM 45818 / CECT 9043 / HFP020203 / CcI3) protein is Ketol-acid reductoisomerase (NADP(+)).